The primary structure comprises 1196 residues: FIP1[V]-like protein (1196 aa).

Disordered regions lie at residues Met-1–Gly-102, Gly-117–Tyr-248, Gly-268–Leu-300, Gly-413–Arg-472, and Ser-485–Pro-1174. Residues Phe-18 to Pro-31 show a composition bias toward pro residues. A compositionally biased stretch (polar residues) spans Gly-117–Glu-126. Over residues Val-129–Gly-141 the composition is skewed to gly residues. 2 stretches are compositionally biased toward acidic residues: residues Glu-142–Leu-154 and Asn-179–Pro-190. Positions Ala-226–Thr-236 are enriched in gly residues. Over residues Gly-268–Gly-278 the composition is skewed to low complexity. Residues Lys-518–Arg-548 show a composition bias toward basic and acidic residues. Residues Ser-549 to Pro-561 are compositionally biased toward polar residues. Basic and acidic residues-rich tracts occupy residues Arg-565 to Lys-592 and Gly-608 to Ser-641. The span at Arg-643 to His-657 shows a compositional bias: polar residues. 5 stretches are compositionally biased toward basic and acidic residues: residues Lys-661–Arg-673, Ser-699–Glu-802, Ser-810–Arg-918, Arg-925–Ala-945, and Asn-953–Asp-971. 2 consecutive short sequence motifs (nuclear localization signal) follow at residues Asp-704–Val-711 and Arg-734–Asp-741. The span at Glu-998–Ala-1021 shows a compositional bias: polar residues. Composition is skewed to basic and acidic residues over residues Asp-1046–Val-1071, Lys-1103–Lys-1137, and Thr-1151–Ser-1163.

Belongs to the FIP1 family. In terms of assembly, component of the cleavage and polyadenylation specificity factor (CPSF) complex. Forms a complex with cleavage and polyadenylation specificity factor (CPSF) subunits CFIS1, CFIS2, CPSF30, CSTF50, CSTF64, CSTF77, FIPS3, PABN1, PABN2, PABN3, PAPS4, CFIM25 and PABN1. Binds RNA. As to expression, expressed in leaves, stems, flower tissues and roots.

It localises to the nucleus. Functionally, essential gene. Component of the cleavage and polyadenylation specificity factor (CPSF) complex that plays a key role in pre-mRNA 3'-end formation, recognizing the AAUAAA signal sequence and interacting with poly(A) polymerase and other factors to bring about cleavage and poly(A) addition. FIP1L1 contributes to poly(A) site recognition and stimulates poly(A) addition. Binds to U-rich RNA sequence elements surrounding the poly(A) site. May act to tether poly(A) polymerase to the CPSF complex. The polypeptide is FIP1[V]-like protein (Arabidopsis thaliana (Mouse-ear cress)).